The sequence spans 143 residues: Small ribosomal subunit protein uS9A (143 aa).

An N-acetylserine modification is found at serine 2. Lysine 30 participates in a covalent cross-link: Glycyl lysine isopeptide (Lys-Gly) (interchain with G-Cter in ubiquitin). At serine 34 the chain carries Phosphoserine. Glycyl lysine isopeptide (Lys-Gly) (interchain with G-Cter in ubiquitin) cross-links involve residues lysine 47 and lysine 59. Serine 61 bears the Phosphoserine mark. Position 70 is a phosphothreonine (threonine 70). Position 76 is a phosphoserine (serine 76). The tract at residues 123-143 (RPEPKKFGGKGARSRFQKSYR) is disordered. A compositionally biased stretch (basic residues) spans 134 to 143 (ARSRFQKSYR).

This sequence belongs to the universal ribosomal protein uS9 family. In terms of assembly, component of the small ribosomal subunit (SSU). Mature yeast ribosomes consist of a small (40S) and a large (60S) subunit. The 40S small subunit contains 1 molecule of ribosomal RNA (18S rRNA) and 33 different proteins (encoded by 57 genes). The large 60S subunit contains 3 rRNA molecules (25S, 5.8S and 5S rRNA) and 46 different proteins (encoded by 81 genes).

The protein resides in the cytoplasm. Its function is as follows. Component of the ribosome, a large ribonucleoprotein complex responsible for the synthesis of proteins in the cell. The small ribosomal subunit (SSU) binds messenger RNAs (mRNAs) and translates the encoded message by selecting cognate aminoacyl-transfer RNA (tRNA) molecules. The large subunit (LSU) contains the ribosomal catalytic site termed the peptidyl transferase center (PTC), which catalyzes the formation of peptide bonds, thereby polymerizing the amino acids delivered by tRNAs into a polypeptide chain. The nascent polypeptides leave the ribosome through a tunnel in the LSU and interact with protein factors that function in enzymatic processing, targeting, and the membrane insertion of nascent chains at the exit of the ribosomal tunnel. This Saccharomyces cerevisiae (strain ATCC 204508 / S288c) (Baker's yeast) protein is Small ribosomal subunit protein uS9A.